We begin with the raw amino-acid sequence, 481 residues long: Glutamate--tRNA ligase (481 aa).

Positions proline 9–threonine 19 match the 'HIGH' region motif. 4 residues coordinate Zn(2+): cysteine 98, cysteine 100, histidine 125, and aspartate 127. The 'KMSKS' region motif lies at lysine 248–arginine 252. An ATP-binding site is contributed by lysine 251.

It belongs to the class-I aminoacyl-tRNA synthetase family. Glutamate--tRNA ligase type 1 subfamily. Monomer. The cofactor is Zn(2+).

It is found in the cytoplasm. It carries out the reaction tRNA(Glu) + L-glutamate + ATP = L-glutamyl-tRNA(Glu) + AMP + diphosphate. Functionally, catalyzes the attachment of glutamate to tRNA(Glu) in a two-step reaction: glutamate is first activated by ATP to form Glu-AMP and then transferred to the acceptor end of tRNA(Glu). This is Glutamate--tRNA ligase from Synechococcus elongatus (strain ATCC 33912 / PCC 7942 / FACHB-805) (Anacystis nidulans R2).